Here is a 568-residue protein sequence, read N- to C-terminus: MESSKKMDSPGALQTNPPLKLHTDRSAGTPVFVPEQGGYKEKFVKTVEDKYKCEKCHLVLCSPKQTECGHRFCESCMAALLSSSSPKCTACQESIVKDKVFKDNCCKREILALQIYCRNESRGCAEQLMLGHLLVHLKNDCHFEELPCVRPDCKEKVLRKDLRDHVEKACKYREATCSHCKSQVPMIALQKHEDTDCPCVVVSCPHKCSVQTLLRSELSAHLSECVNAPSTCSFKRYGCVFQGTNQQIKAHEASSAVQHVNLLKEWSNSLEKKVSLLQNESVEKNKSIQSLHNQICSFEIEIERQKEMLRNNESKILHLQRVIDSQAEKLKELDKEIRPFRQNWEEADSMKSSVESLQNRVTELESVDKSAGQVARNTGLLESQLSRHDQMLSVHDIRLADMDLRFQVLETASYNGVLIWKIRDYKRRKQEAVMGKTLSLYSQPFYTGYFGYKMCARVYLNGDGMGKGTHLSLFFVIMRGEYDALLPWPFKQKVTLMLMDQGSSRRHLGDAFKPDPNSSSFKKPTGEMNIASGCPVFVAQTVLENGTYIKDDTIFIKVIVDTSDLPDP.

The disordered stretch occupies residues 1–28 (MESSKKMDSPGALQTNPPLKLHTDRSAG). Ser9 bears the Phosphoserine mark. Cys56 participates in a covalent cross-link: Glycyl cysteine thioester (Cys-Gly) (interchain with G-Cter in ubiquitin). An RING-type zinc finger spans residues 68 to 77 (CGHRFCESCM). Cys124 participates in a covalent cross-link: Glycyl cysteine thioester (Cys-Gly) (interchain with G-Cter in ubiquitin). TRAF-type zinc fingers lie at residues 135-190 (VHLK…IALQ) and 191-249 (KHED…QQIK). Lys168 is covalently cross-linked (Glycyl lysine isopeptide (Lys-Gly) (interchain with G-Cter in ubiquitin)). Residues 267–338 (SNSLEKKVSL…KLKELDKEIR (72 aa)) adopt a coiled-coil conformation. Residue Lys329 forms a Glycyl lysine isopeptide (Lys-Gly) (interchain with G-Cter in ubiquitin) linkage. The tract at residues 392-415 (LSVHDIRLADMDLRFQVLETASYN) is (Microbial infection) Interaction with glycoprotein N of Andes and New York hantaviruses. The 146-residue stretch at 415–560 (NGVLIWKIRD…DDTIFIKVIV (146 aa)) folds into the MATH domain.

Belongs to the TNF receptor-associated factor family. A subfamily. In terms of assembly, homotrimer. Heterotrimer with TRAF2 and TRAF5. Interacts with LTBR/TNFRSF3, TNFRSF4, TNFRSF5/CD40, TNFRSF8/CD30, TNFRSF13C TNFRSF17/BCMA, TLR4 and EDAR. Interacts with MAP3K5, MAP3K14, TRAIP/TRIP, TDP2/TTRAP, TANK/ITRAF and TRAF3IP1. Interaction with TNFRSF5/CD40 is modulated by TANK/ITRAF, which competes for the same binding site. Interacts with TICAM1. Interacts with TRAFD1. Interacts with OTUB1, OTUB2 and OTUD5. Interacts with RNF216, OPTN and TBK1. Identified in a complex with TRAF2, MAP3K14 and BIRC3. Interacts with BIRC2 and BIRC3. Upon exposure to bacterial lipopolysaccharide (LPS), recruited to a transient complex containing TLR4, TRAF3, TRAF6, IKBKG, MAP3K7, MYD88, TICAM1, BIRC2, BIRC3 and UBE2N. Interacts (via RING-type zinc finger domain) with SRC. Interacts with CARD14. Interacts (via MATH domain) with PTPN22; the interaction promotes TRAF3 polyubiquitination. Interacts with MAVS. Directly interacts with DDX3X; this interaction stimulates TRAF3 'Lys-63' ubiquitination. Interacts with IRF3. Interacts with IKBKE in the course of Sendai virus infection. Interacts with TRIM35. Interacts with GAPDH; promoting TRAF3 ubiquitination. Interacts with PPP3CA and PPP3CB. Interacts with ATP1B1; promoting TRAF3 ubiquitination. Interacts with RALGDS. Interacts with FBXO11. (Microbial infection) Interacts (via N-terminus) with New York hantavirus glycoprotein N (via C-terminus); this interaction inhibits the formation of TRAF3-TBK1 complexes. As to quaternary structure, (Microbial infection) Interacts with Andes hantavirus glycoprotein N (via C-terminus); this interaction inhibits the formation of TRAF3-TBK1 complexes. In terms of assembly, (Microbial infection) Interacts with Tula hantavirus glycoprotein N (via C-terminus); this interaction inhibits the formation of TRAF3-TBK1 complexes. (Microbial infection) Interacts with Epstein-Barr virus protein LMP1. Undergoes 'Lys-48'-linked polyubiquitination, leading to its proteasomal degradation in response to signaling by TNFSF13B, TLR4 or through CD40. 'Lys-48'-linked polyubiquitinated form is deubiquitinated by OTUD7B, preventing TRAF3 proteolysis and over-activation of non-canonical NF-kappa-B. Undergoes 'Lys-63'-linked ubiquitination during early stages of virus infection, and 'Lys-48'-linked ubiquitination during later stages. Undergoes both 'Lys-48'-linked and 'Lys-63'-linked ubiquitination in response to TLR3 and TLR4 signaling. 'Lys-63'-linked ubiquitination can be mediated by TRIM35. Deubiquitinated by OTUB1, OTUB2 and OTUD5. Undergoes 'Lys-63'-linked deubiquitination by MYSM1 to terminate the pattern-recognition receptors/PRRs pathways. Also undergoes 'Lys-29'-linked ubiquitination on Cys-56 and Cys-124 by NEDD4L; leading to increased 'Lys-48'- and 'Lys-63'-linked ubiquitination as well as increased binding to TBK1. TLR4 signals emanating from bacteria containing vesicles trigger 'Lys-33'-linked polyubiquitination that promotes the assembly of the exocyst complex thereby connecting innate immune signaling to the cellular trafficking apparatus. Deubiquitinated by USP25 during viral infection, leading to TRAF3 stabilization and type I interferon production. Ubiquitinated at Lys-329 by the SCF(FBXL2) complex, leading to its degradation by the proteasome. 'Lys-63'-linked ubiquitination by FBXO11 in a NEDD8-dependent manner promotes the amplification of IFN-I signaling. In terms of processing, (Microbial infection) Cleaved by enterovirus D68 protease 2A; leading to inhibition of NF-kappa-B or IFN-beta triggered by TRAF3.

The protein resides in the cytoplasm. The protein localises to the endosome. Its subcellular location is the mitochondrion. It carries out the reaction S-ubiquitinyl-[E2 ubiquitin-conjugating enzyme]-L-cysteine + [acceptor protein]-L-lysine = [E2 ubiquitin-conjugating enzyme]-L-cysteine + N(6)-ubiquitinyl-[acceptor protein]-L-lysine.. Cytoplasmic E3 ubiquitin ligase that regulates various signaling pathways, such as the NF-kappa-B, mitogen-activated protein kinase (MAPK) and interferon regulatory factor (IRF) pathways, and thus controls a lot of biological processes in both immune and non-immune cell types. In TLR and RLR signaling pathways, acts as an E3 ubiquitin ligase promoting the synthesis of 'Lys-63'-linked polyubiquitin chains on several substrates such as ASC that lead to the activation of the type I interferon response or the inflammasome. Following the activation of certain TLRs such as TLR4, acts as a negative NF-kappa-B regulator, possibly to avoid unregulated inflammatory response, and its degradation via 'Lys-48'-linked polyubiquitination is required for MAPK activation and production of inflammatory cytokines. Alternatively, when TLR4 orchestrates bacterial expulsion, TRAF3 undergoes 'Lys-33'-linked polyubiquitination and subsequently binds to RALGDS, mobilizing the exocyst complex to rapidly expel intracellular bacteria back for clearance. Also acts as a constitutive negative regulator of the alternative NF-kappa-B pathway, which controls B-cell survival and lymphoid organ development. Required for normal antibody isotype switching from IgM to IgG. Plays a role T-cell dependent immune responses. Down-regulates proteolytic processing of NFKB2, and thereby inhibits non-canonical activation of NF-kappa-B. Promotes ubiquitination and proteasomal degradation of MAP3K14. This chain is TNF receptor-associated factor 3, found in Homo sapiens (Human).